A 373-amino-acid chain; its full sequence is Peptide chain release factor 2 (373 aa).

N5-methylglutamine is present on Q252.

The protein belongs to the prokaryotic/mitochondrial release factor family. Post-translationally, methylated by PrmC. Methylation increases the termination efficiency of RF2.

It is found in the cytoplasm. Peptide chain release factor 2 directs the termination of translation in response to the peptide chain termination codons UGA and UAA. The chain is Peptide chain release factor 2 from Staphylococcus saprophyticus subsp. saprophyticus (strain ATCC 15305 / DSM 20229 / NCIMB 8711 / NCTC 7292 / S-41).